The following is a 369-amino-acid chain: 4-hydroxyproline betaine 2-epimerase (369 aa).

Substrate-binding residues include Tyr-56 and Gln-162. The active-site Proton donor/acceptor is the Lys-164. 3 residues coordinate Mg(2+): Asp-194, Glu-219, and Asp-242. Lys-266 functions as the Proton donor/acceptor in the catalytic mechanism. Position 295 (Ala-295) interacts with substrate.

This sequence belongs to the mandelate racemase/muconate lactonizing enzyme family. Mg(2+) is required as a cofactor.

It carries out the reaction trans-4-hydroxy-L-proline betaine = cis-4-hydroxy-D-proline betaine. The catalysed reaction is L-proline betaine = D-proline betaine. In terms of biological role, catalyzes the 2-epimerization of trans-4-hydroxy-L-proline betaine (tHyp-B) to cis-4-hydroxy-D-proline betaine (cHyp-B). Is involved in a catabolic pathway that degrades tHyp-B to alpha-ketoglutarate. This pathway would permit the utilization of tHyp-B as a carbon and nitrogen source in the absence of osmotic stress, since tHyp-B functions as an osmolyte and is not catabolized when it is needed as osmoprotectant. Can also catalyze the racemization of L-proline betaine. The sequence is that of 4-hydroxyproline betaine 2-epimerase (hpbD) from Paracoccus denitrificans (strain Pd 1222).